The primary structure comprises 197 residues: SIGLEC family-like protein 1 (197 aa).

Residues 118 to 138 (GAIYAGIVIALLFLCLLPLIV) form a helical membrane-spanning segment. The tract at residues 160-179 (VRASQELEMSLKPEEPGKPV) is disordered. A compositionally biased stretch (basic and acidic residues) spans 162–176 (ASQELEMSLKPEEPG).

The protein resides in the membrane. This Homo sapiens (Human) protein is SIGLEC family-like protein 1 (SIGLECL1).